The sequence spans 378 residues: UPF0754 membrane protein BALH_0780 (378 aa).

The next 2 membrane-spanning stretches (helical) occupy residues 1–21 (MNIW…GGFT) and 357–377 (YLGA…LLFL).

It belongs to the UPF0754 family.

It is found in the cell membrane. This Bacillus thuringiensis (strain Al Hakam) protein is UPF0754 membrane protein BALH_0780.